Reading from the N-terminus, the 488-residue chain is Poly(3-hydroxybutyrate) depolymerase (488 aa).

An N-terminal signal peptide occupies residues 1 to 27 (MVRRLWRRIAGWLAACVAILCAFPLHA). Ser166 serves as the catalytic Charge relay system. Residues 346 to 428 (APTGLAVTAT…AAVSATTKSA (83 aa)) form the Fibronectin type-III domain.

The protein belongs to the AB hydrolase superfamily. Lipase family.

It is found in the secreted. The catalysed reaction is [(3R)-hydroxybutanoate](n) + H2O = [(3R)-hydroxybutanoate](n-2) + (3R)-hydroxybutanoate dimer + H(+). The enzyme catalyses [(3R)-hydroxybutanoate](n) + H2O = [(3R)-hydroxybutanoate](n-3) + (3R)-hydroxybutanoate trimer + H(+). It carries out the reaction [(3R)-hydroxybutanoate](n) + H2O = [(3R)-hydroxybutanoate](n-1) + (R)-3-hydroxybutanoate + H(+). It catalyses the reaction [(3R)-hydroxybutanoate](n) + H2O = [(3R)-hydroxybutanoate](n-5) + (3R)-hydroxybutanoate pentamer + H(+). The catalysed reaction is [(3R)-hydroxybutanoate](n) + H2O = [(3R)-hydroxybutanoate](n-4) + (3R)-hydroxybutanoate tetramer + H(+). This protein degrades water-insoluble and water-soluble PHB to monomeric D(-)-3-hydroxybutyrate. The sequence is that of Poly(3-hydroxybutyrate) depolymerase from Ralstonia pickettii (Burkholderia pickettii).